The following is a 327-amino-acid chain: GMP reductase (327 aa).

C175 acts as the Thioimidate intermediate in catalysis. 204–227 (IIADGGIRTHGDVAKSIRFGATMV) is a binding site for NADP(+).

It belongs to the IMPDH/GMPR family. GuaC type 2 subfamily.

The enzyme catalyses IMP + NH4(+) + NADP(+) = GMP + NADPH + 2 H(+). In terms of biological role, catalyzes the irreversible NADPH-dependent deamination of GMP to IMP. It functions in the conversion of nucleobase, nucleoside and nucleotide derivatives of G to A nucleotides, and in maintaining the intracellular balance of A and G nucleotides. This Bacillus thuringiensis subsp. konkukian (strain 97-27) protein is GMP reductase.